The chain runs to 406 residues: Prenyltransferase phqJ (406 aa).

A compositionally biased stretch (polar residues) spans 1-19; the sequence is MTVSTESNFPHGASTQKPQ. Residues 1-23 are disordered; that stretch reads MTVSTESNFPHGASTQKPQSAEP. Residue Glu-99 participates in brevianamide F binding. Dimethylallyl diphosphate is bound by residues Arg-113, Lys-200, and Tyr-202. Residue Tyr-204 coordinates brevianamide F. Dimethylallyl diphosphate contacts are provided by Lys-269, Tyr-271, and Tyr-340.

Belongs to the tryptophan dimethylallyltransferase family.

Its pathway is alkaloid biosynthesis. Prenyltransferase; part of the gene cluster that mediates the biosynthesis of paraherquamide, a fungal indole alkaloid that belongs to a family of natural products containing a characteristic bicyclo[2.2.2]diazaoctane core. The first steps in the biosynthesis of paraherquamide is the production of the beta-methyl-proline precursor from L-isoleucine. They require oxidation of a terminally hydroxylated L-isoleucine to the corresponding aldehyde by enzymes which have still to be identified. Spontaneous cyclization and dehydration would yield the 4-methyl pyrolline-5-carboxylic acid, which is then reduced by the pyrroline-5-carboxylate reductase phqD leading to the beta-methyl-proline precursor. The next step of paraherquamide biosynthesis involves coupling of beta-methyl-proline and L-tryptophan by the bimodular NRPS phqB, to produce a monooxopiperazine intermediate. The reductase (R) domain of phqB utilizes NADPH for hydride transfer to reduce the thioester bond of the T domain-tethered linear dipeptide to a hemithioaminal intermediate, which spontaneously cleaves the C-S bond to release the aldehyde product. This compound undergoes spontaneous cyclization and dehydration to give a dienamine which is reverse prenylated at C-2 by the reverse prenyltransferase phqJ. The other prenyltransferase present in the cluster, phqI may be a redundant gene in the pathway. During biosynthetic assembly, the key step to produce the polycyclic core is catalyzed by the bifunctional reductase and intramolecular [4+2] Diels-Alderase, phqE, resulting in formation of the [2.2.2] diazaoctane intermediate preparaherquamide. Following formation of preparaherquamide, an indole 2,3-epoxidation-initiated pinacol-like rearrangement is catalyzed by the phqK FAD-dependent monooxygenase. The prenyltransferase phqA, the cytochrome P450 monooxygenase phqL, and the FAD-linked oxidoreductase phqH (or the cytochrome P450 monooxygenase phqM), are proposed to be involved in the formation of the pyran ring. The FAD-dependent monooxygenase phqK is likely responsible for generation of the spiro-oxindole, and the N-methylation is likely mediated by the phqN methyltransferase leading to the isolable natural product paraherquamide F. However, the order of these biosynthetic steps has still to be determined. In late-stage paraherquamide biosynthesis, the third P450 monooxygenase, phqO, is probably responsible for the C-14 hydroxylation, transforming paraherquamide F to paraherquamide G, and paraherquamide E to the final product paraherquamide A. The expansion from the 6-membered ring pyran (in paraherquamides F and G) to the 7-membered dioxepin ring (in paraherquamides A and E) represents a poorly understood but intriguing process that probably involves the 2-oxoglutarate-dependent dioxygenase phqC. Finally, the remaining members of the paraherquamide cluster, including phqI as well as phqM (or phqH), do not have a clearly prescribed role and appear to be redundant. The protein is Prenyltransferase phqJ of Penicillium fellutanum.